The following is a 431-amino-acid chain: Glutamate-1-semialdehyde 2,1-aminomutase (431 aa).

Lys-265 carries the N6-(pyridoxal phosphate)lysine modification.

It belongs to the class-III pyridoxal-phosphate-dependent aminotransferase family. HemL subfamily. Homodimer. Requires pyridoxal 5'-phosphate as cofactor.

It is found in the cytoplasm. The catalysed reaction is (S)-4-amino-5-oxopentanoate = 5-aminolevulinate. It functions in the pathway porphyrin-containing compound metabolism; protoporphyrin-IX biosynthesis; 5-aminolevulinate from L-glutamyl-tRNA(Glu): step 2/2. The protein is Glutamate-1-semialdehyde 2,1-aminomutase of Aliivibrio salmonicida (strain LFI1238) (Vibrio salmonicida (strain LFI1238)).